The primary structure comprises 66 residues: UPF0434 protein Jann_0424 (66 aa).

Belongs to the UPF0434 family.

This is UPF0434 protein Jann_0424 from Jannaschia sp. (strain CCS1).